A 66-amino-acid chain; its full sequence is Large ribosomal subunit protein bL35 (66 aa).

A disordered region spans residues 1–23; the sequence is MPKMKTHRASAKRFKRTANGGLK.

Belongs to the bacterial ribosomal protein bL35 family.

The sequence is that of Large ribosomal subunit protein bL35 from Lactobacillus helveticus (strain DPC 4571).